Here is a 457-residue protein sequence, read N- to C-terminus: Dynein regulatory complex protein 10 (457 aa).

Coiled-coil stretches lie at residues 101 to 127 (EKAS…DQER), 209 to 258 (IQDI…LHQV), and 292 to 381 (QQDI…AESE). In terms of domain architecture, IQ spans 397–426 (MVRAATLIQAMWKGYLVRSMLRSRKKKRVK). Positions 419–457 (SRKKKRVKSKGKDKGKGKEKPKEEKGKEKKAKGKGKGKK) are disordered. A compositionally biased stretch (basic and acidic residues) spans 428 to 445 (KGKDKGKGKEKPKEEKGK). A compositionally biased stretch (basic residues) spans 446–457 (EKKAKGKGKGKK).

It belongs to the DRC10 family. Component of the nexin-dynein regulatory complex (N-DRC). Interacts with CFAP52.

The protein localises to the cytoplasm. The protein resides in the cytoskeleton. It localises to the flagellum axoneme. In terms of biological role, component of the nexin-dynein regulatory complex (N-DRC), a key regulator of ciliary/flagellar motility which maintains the alignment and integrity of the distal axoneme and regulates microtubule sliding in motile axonemes. The polypeptide is Dynein regulatory complex protein 10 (Iqcd) (Rattus norvegicus (Rat)).